The chain runs to 159 residues: Putative 2'-deoxynucleoside 5'-phosphate N-hydrolase 1 (159 aa).

Residues 25–31 (FLSGSIR), Tyr-40, His-58, Glu-104, and 126–128 (SAM) each bind substrate.

It belongs to the 2'-deoxynucleoside 5'-phosphate N-hydrolase 1 family. Monomer and homodimer.

It carries out the reaction a pyrimidine 2'-deoxyribonucleoside 5'-phosphate + H2O = a pyrimidine nucleobase + 2-deoxy-D-ribose 5-phosphate. It catalyses the reaction a purine 2'-deoxyribonucleoside 5'-phosphate + H2O = a purine nucleobase + 2-deoxy-D-ribose 5-phosphate. In terms of biological role, catalyzes the cleavage of the N-glycosidic bond of deoxyribonucleoside 5'-monophosphates to yield deoxyribose 5-phosphate and a purine or pyrimidine base. The sequence is that of Putative 2'-deoxynucleoside 5'-phosphate N-hydrolase 1 from Methanosarcina barkeri (strain Fusaro / DSM 804).